Reading from the N-terminus, the 403-residue chain is Leu/Ile/Val-binding protein homolog 8 (403 aa).

Residues 1–26 (MRLSRLLIGASLGVALSSTAFTAALA) form the signal peptide.

This sequence belongs to the leucine-binding protein family.

Functionally, component of an amino-acid transport system. The sequence is that of Leu/Ile/Val-binding protein homolog 8 from Brucella suis biovar 1 (strain 1330).